The sequence spans 436 residues: 3-ketoacyl-CoA thiolase (436 aa).

Cysteine 99 serves as the catalytic Acyl-thioester intermediate. Residues histidine 392 and cysteine 422 each act as proton acceptor in the active site.

Belongs to the thiolase-like superfamily. Thiolase family. In terms of assembly, heterotetramer of two alpha chains (FadJ) and two beta chains (FadI).

It localises to the cytoplasm. The enzyme catalyses an acyl-CoA + acetyl-CoA = a 3-oxoacyl-CoA + CoA. Its pathway is lipid metabolism; fatty acid beta-oxidation. In terms of biological role, catalyzes the final step of fatty acid oxidation in which acetyl-CoA is released and the CoA ester of a fatty acid two carbons shorter is formed. This chain is 3-ketoacyl-CoA thiolase, found in Salmonella heidelberg (strain SL476).